Consider the following 269-residue polypeptide: Putative hydro-lyase Aave_3512 (269 aa).

The protein belongs to the D-glutamate cyclase family.

This is Putative hydro-lyase Aave_3512 from Paracidovorax citrulli (strain AAC00-1) (Acidovorax citrulli).